The primary structure comprises 119 residues: MKRIAFVFSTAPHGTAAGREGLDALLATSALTDDLAVFFIADGVFQLLPGQKPDAVLARDYIATFKLLGLYDIEQCWVCAASLRERGLDPQTPFVVEATPLEADALRRELANYDVILRF.

This sequence belongs to the DsrF/TusC family. In terms of assembly, heterohexamer, formed by a dimer of trimers. The hexameric TusBCD complex contains 2 copies each of TusB, TusC and TusD. The TusBCD complex interacts with TusE.

It localises to the cytoplasm. Its function is as follows. Part of a sulfur-relay system required for 2-thiolation of 5-methylaminomethyl-2-thiouridine (mnm(5)s(2)U) at tRNA wobble positions. This Shigella sonnei (strain Ss046) protein is Protein TusC.